The chain runs to 398 residues: Succinate--CoA ligase [ADP-forming] subunit beta (398 aa).

The region spanning 9–254 (KAVLREFGVP…ETEEDAKEIE (246 aa)) is the ATP-grasp domain. Residues Lys46, 53–55 (GRG), Glu109, Ser112, and Glu117 each bind ATP. Mg(2+) contacts are provided by Asn209 and Asp223. Residues Asn274 and 331-333 (GIM) contribute to the substrate site.

Belongs to the succinate/malate CoA ligase beta subunit family. In terms of assembly, heterotetramer of two alpha and two beta subunits. Requires Mg(2+) as cofactor.

The enzyme catalyses succinate + ATP + CoA = succinyl-CoA + ADP + phosphate. It catalyses the reaction GTP + succinate + CoA = succinyl-CoA + GDP + phosphate. The protein operates within carbohydrate metabolism; tricarboxylic acid cycle; succinate from succinyl-CoA (ligase route): step 1/1. Succinyl-CoA synthetase functions in the citric acid cycle (TCA), coupling the hydrolysis of succinyl-CoA to the synthesis of either ATP or GTP and thus represents the only step of substrate-level phosphorylation in the TCA. The beta subunit provides nucleotide specificity of the enzyme and binds the substrate succinate, while the binding sites for coenzyme A and phosphate are found in the alpha subunit. The polypeptide is Succinate--CoA ligase [ADP-forming] subunit beta (Rhodopseudomonas palustris (strain ATCC BAA-98 / CGA009)).